A 242-amino-acid chain; its full sequence is Small ribosomal subunit protein uS2 (242 aa).

Belongs to the universal ribosomal protein uS2 family.

This Aliivibrio fischeri (strain ATCC 700601 / ES114) (Vibrio fischeri) protein is Small ribosomal subunit protein uS2.